Reading from the N-terminus, the 451-residue chain is MENDQFLQKQHFLILGLAKSGYAAASILHEKGIYVAVNDQKPFEENEPAQKLSEKGIEVVCGEHPVSLFDQHQITILIKNPGIPYENIMVQEAEKRGIPVWTEIELAYYLTSAKFIGITGSNGKTTTTTLIYEMLKADSQKALIAGNIGTVASEVAYHADGDEWIVTELSSFQLMGTHAFRPEISLILNVFDAHLDYHHTRENYEKAKQKVYLHQTASDKAIVNQDDETVVRLAEAGKAEIVPFSVSKTLEQGAYVKDSMIMFNGEAILPLEEVVLPGAHNLENILAAIAVVKTAGASNEAVKKVLTSFTGVKHRLQYVTTVNGRKFYNDSKATNILATSKALSAFDKPVILLAGGLDRGNGFDDLKPYMKHVKAVLTFGQTAPKLEKLGNELGIQHVKRVDNVEQAVSAAFALSNEGDVILLSPACASWDQFKTFEERGDMFIDAVHMLK.

Residue 120–126 (GSNGKTT) coordinates ATP.

The protein belongs to the MurCDEF family.

The protein localises to the cytoplasm. It carries out the reaction UDP-N-acetyl-alpha-D-muramoyl-L-alanine + D-glutamate + ATP = UDP-N-acetyl-alpha-D-muramoyl-L-alanyl-D-glutamate + ADP + phosphate + H(+). It functions in the pathway cell wall biogenesis; peptidoglycan biosynthesis. In terms of biological role, cell wall formation. Catalyzes the addition of glutamate to the nucleotide precursor UDP-N-acetylmuramoyl-L-alanine (UMA). The protein is UDP-N-acetylmuramoylalanine--D-glutamate ligase (murD) of Bacillus subtilis (strain 168).